A 448-amino-acid chain; its full sequence is MRITFNDVKTSLGITESYDIVNAIRNSQGDSFKSYVPLATADNVAEVGAGILINQTVQNDFITSLVDRIGLVVIRQVSLNNPLKKFKKGQIPLGRTIEEIYTDITKEKQYDAEEAEHKVFEREMPNVKTLFHERNRQGFYHQTIQDDSLKTAFVSWGNFESFVSSIINAIYNSAEVDEYEYMKLLVDNYYSKGLFTTVKIDEPTSSTGALTEFVKKMRATARKLTLPQGSRDWNSMAVRTRSYMEDLHLIIDADLEAELDVDVLAKAFNMNRTDFLGNVTVIDGFASTGLEAVLVDKDWFMVYDNLHKMETVRNPRGLYWNYYYHVWQTLSVSRSANAVAFVSGDVPAVTQVIVSPNIAAVKQGGKQQFTAYVRATDGKDHKVVWSVEGGSTGTAITGDGLLSVSGNEENQLTVKATVDIGTEDKPNLVVGEAVVSIRPNNASGGAQA.

Residues 104–127 are a coiled coil; it reads ITKEKQYDAEEAEHKVFEREMPNV. One can recognise a BIG2 domain in the interval 348-425; the sequence is AVTQVIVSPN…ATVDIGTEDK (78 aa).

It belongs to the phi29likevirus major capsid protein family. In terms of assembly, homohexamer. Homopentamer. The prolate capsid is composed of pentamers and hexamers of the capsid protein.

The protein localises to the virion. Its function is as follows. Assembles to form a prolate capsid shell of about 54 nm in length and 45 nm in width, with a T=3, Q=5 symmetry. This Bacillus subtilis (Bacteriophage PZA) protein is Major capsid protein (8).